The sequence spans 188 residues: Peroxiredoxin y4vD (188 aa).

The region spanning 2–152 (PVKKRVPFVA…VEQWFEEEGF (151 aa)) is the Thioredoxin domain. The active-site Cysteine sulfenic acid (-SOH) intermediate (for peroxiredoxin activity) is Cys56.

Belongs to the peroxiredoxin family. Prx5 subfamily. In terms of assembly, monomer.

The enzyme catalyses a hydroperoxide + 2 glutathione = an alcohol + glutathione disulfide + H2O. Functionally, thiol-specific peroxidase that catalyzes the reduction of hydrogen peroxide and organic hydroperoxides to water and alcohols, respectively. Plays a role in cell protection against oxidative stress by detoxifying peroxides. In Sinorhizobium fredii (strain NBRC 101917 / NGR234), this protein is Peroxiredoxin y4vD.